Consider the following 100-residue polypeptide: UPF0213 protein YhbQ (100 aa).

The region spanning 2–77 is the GIY-YIG domain; that stretch reads TPWFLYLIRT…KQLTKRQKER (76 aa).

This sequence belongs to the UPF0213 family.

This Escherichia coli O17:K52:H18 (strain UMN026 / ExPEC) protein is UPF0213 protein YhbQ.